We begin with the raw amino-acid sequence, 129 residues long: Venom CUB domain-containing protein 1 (129 aa).

The first 18 residues, 1–18 (MKLLGVLITIYCIASTLA), serve as a signal peptide directing secretion. Residues 19-121 (IDVNVPSNGM…KASCKAYSIT (103 aa)) enclose the CUB domain. Cysteine 66 and cysteine 83 are oxidised to a cystine.

The protein belongs to the venom CUB family. Post-translationally, contains 2 disulfide bonds. Expressed by the venom gland.

The protein localises to the secreted. The polypeptide is Venom CUB domain-containing protein 1 (Platymeris rhadamanthus (Red spot assassin bug)).